Consider the following 1233-residue polypeptide: Structural maintenance of chromosomes protein 1A (1233 aa).

32–39 (GPNGSGKS) is an ATP binding site. Coiled coils occupy residues 104 to 124 (EYKI…LEKL) and 163 to 503 (ELAQ…KAEI). The segment covering 284–293 (IKEKDSELNQ) has biased composition (basic and acidic residues). Disordered stretches follow at residues 284–307 (IKEK…NTSH) and 350–369 (FEER…TLEE). Residues Ser-358 and Ser-360 each carry the phosphoserine modification. The 115-residue stretch at 515–629 (VYGRLIDLCQ…DNVEDARRIA (115 aa)) folds into the SMC hinge domain. 2 positions are modified to N6-acetyllysine: Lys-648 and Lys-713. The stretch at 660–935 (KAKARRWDEK…RHNLLQACKM (276 aa)) forms a coiled coil. Positions 946-969 (TMDDISQEEGGSQGEESVSGSQRT) are disordered. The segment covering 953 to 967 (EEGGSQGEESVSGSQ) has biased composition (low complexity). Phosphoserine occurs at positions 957, 962, 966, and 970. Positions 991-1068 (KDAQAEEEIK…FEQIKKERFD (78 aa)) form a coiled coil. An N6-acetyllysine modification is found at Lys-1037.

Belongs to the SMC family. SMC1 subfamily. In terms of assembly, forms a heterodimer with SMC3 in cohesin complexes. Cohesin complexes are composed of the SMC1 (SMC1A or meiosis-specific SMC1B) and SMC3 heterodimer attached via their SMC hinge domain, RAD21 which link them, and one STAG protein (STAG1, STAG2 or meiosis-specific STAG3), which interacts with RAD21. In germ cell cohesin complexes, SMC1A is mutually exclusive with SMC1B. Found in a complex with CDCA5, SMC3 and RAD21, PDS5A/SCC-112 and PDS5B/APRIN. Interacts with STAG3, NDC80, BRAC1, BRAT1 and RPGR. Found in a complex containing POLE and SMC3. The cohesin complex interacts with the cohesin loading complex subunits NIPBL/Scc2 (via HEAT repeats) and MAU2/Scc4. NIPBL directly contacts all members of the complex, RAD21, SMC1A/B, SMC3 and STAG1. Interacts with SYCP2. In terms of processing, phosphorylated upon ionizing radiation or DNA methylation. Phosphorylation of Ser-957 and Ser-966 activates it and is required for S-phase checkpoint activation. Ubiquitinated by the DCX(DCAF15) complex, leading to its degradation.

It is found in the nucleus. The protein localises to the chromosome. In terms of biological role, involved in chromosome cohesion during cell cycle and in DNA repair. Central component of cohesin complex. The cohesin complex is required for the cohesion of sister chromatids after DNA replication. The cohesin complex apparently forms a large proteinaceous ring within which sister chromatids can be trapped. At anaphase, the complex is cleaved and dissociates from chromatin, allowing sister chromatids to segregate. The cohesin complex may also play a role in spindle pole assembly during mitosis. Involved in DNA repair via its interaction with BRCA1 and its related phosphorylation by ATM, or via its phosphorylation by ATR. Works as a downstream effector both in the ATM/NBS1 branch and in the ATR/MSH2 branch of S-phase checkpoint. The sequence is that of Structural maintenance of chromosomes protein 1A (Smc1a) from Rattus norvegicus (Rat).